The following is a 274-amino-acid chain: 4-diphosphocytidyl-2-C-methyl-D-erythritol kinase (274 aa).

Residue lysine 9 is part of the active site. 91 to 101 (PAGAGLGGGSS) serves as a coordination point for ATP. Aspartate 133 is a catalytic residue.

Belongs to the GHMP kinase family. IspE subfamily.

It catalyses the reaction 4-CDP-2-C-methyl-D-erythritol + ATP = 4-CDP-2-C-methyl-D-erythritol 2-phosphate + ADP + H(+). The protein operates within isoprenoid biosynthesis; isopentenyl diphosphate biosynthesis via DXP pathway; isopentenyl diphosphate from 1-deoxy-D-xylulose 5-phosphate: step 3/6. Functionally, catalyzes the phosphorylation of the position 2 hydroxy group of 4-diphosphocytidyl-2C-methyl-D-erythritol. This chain is 4-diphosphocytidyl-2-C-methyl-D-erythritol kinase, found in Persephonella marina (strain DSM 14350 / EX-H1).